We begin with the raw amino-acid sequence, 354 residues long: Glutamine synthetase cytosolic isozyme 1-3 (354 aa).

Ser-2 carries the N-acetylserine modification. A phosphoserine mark is found at Ser-2 and Ser-48. The GS beta-grasp domain maps to 19 to 99 (IIAEYIWIGG…VMCDAYTPAG (81 aa)). The region spanning 106-354 (KRHNAAKIFS…SMIAETTILG (249 aa)) is the GS catalytic domain.

Belongs to the glutamine synthetase family. Homooctamer. As to expression, expressed in the pericycle in the region of mature root.

It is found in the cytoplasm. The enzyme catalyses L-glutamate + NH4(+) + ATP = L-glutamine + ADP + phosphate + H(+). Functionally, low-affinity glutamine synthetase. May contribute to the homeostatic control of glutamine synthesis in roots. The protein is Glutamine synthetase cytosolic isozyme 1-3 (GLN1-3) of Arabidopsis thaliana (Mouse-ear cress).